Consider the following 152-residue polypeptide: MSTINTDTNEAMPHISVNAQYIKDLSLENPSAPSSLAALEQRPQIDLSLDINITNLSEENFYEVELNIEATARNEKYKLFQIELKYAGVFNLINIDSEQHPILLSVHCPAMIFPFARKIIASCTQDAGFQPLMIDPIDFGALYHKKMSEHQN.

It belongs to the SecB family. In terms of assembly, homotetramer, a dimer of dimers. One homotetramer interacts with 1 SecA dimer.

The protein resides in the cytoplasm. Functionally, one of the proteins required for the normal export of preproteins out of the cell cytoplasm. It is a molecular chaperone that binds to a subset of precursor proteins, maintaining them in a translocation-competent state. It also specifically binds to its receptor SecA. The chain is Protein-export protein SecB from Rickettsia felis (strain ATCC VR-1525 / URRWXCal2) (Rickettsia azadi).